A 372-amino-acid chain; its full sequence is Type II methyltransferase M1.HphI (372 aa).

The SAM-dependent MTase C5-type domain occupies 45–372 (LTYIDLFSGA…EAVLKMNTNE (328 aa)). C122 is a catalytic residue.

It belongs to the class I-like SAM-binding methyltransferase superfamily. C5-methyltransferase family.

The catalysed reaction is a 2'-deoxycytidine in DNA + S-adenosyl-L-methionine = a 5-methyl-2'-deoxycytidine in DNA + S-adenosyl-L-homocysteine + H(+). In terms of biological role, a methylase that recognizes the double-stranded sequence 5'-GGTGA-3' and protects the DNA from cleavage by the HphI endonuclease. Probably methylates C-2 on the bottom strand. This chain is Type II methyltransferase M1.HphI (hphIAM), found in Haemophilus parahaemolyticus.